Consider the following 185-residue polypeptide: GTP cyclohydrolase 1 (185 aa).

Cysteine 76, histidine 79, and cysteine 147 together coordinate Zn(2+).

The protein belongs to the GTP cyclohydrolase I family. As to quaternary structure, toroid-shaped homodecamer, composed of two pentamers of five dimers.

The catalysed reaction is GTP + H2O = 7,8-dihydroneopterin 3'-triphosphate + formate + H(+). The protein operates within cofactor biosynthesis; 7,8-dihydroneopterin triphosphate biosynthesis; 7,8-dihydroneopterin triphosphate from GTP: step 1/1. The polypeptide is GTP cyclohydrolase 1 (Clostridium perfringens (strain 13 / Type A)).